Consider the following 1325-residue polypeptide: SCAN domain-containing protein 3 (1325 aa).

The SCAN box domain occupies 52-134 (RQRFRQFCYQ…TLLEDLEREL (83 aa)). The stretch at 246-275 (KAKYCQLIKEVKEAKAKAKKESVDYRRLAR) forms a coiled coil. Residues 366–526 (KSIKEVSSRC…TPCESAFSSE (161 aa)) enclose the Integrase catalytic domain. Residues 542–568 (ASLHTENELDQADKELENTLRAQYEEN) are a coiled coil.

In terms of tissue distribution, weakly expressed in the lung (at protein level).

It is found in the nucleus. The protein is SCAN domain-containing protein 3 of Homo sapiens (Human).